The primary structure comprises 176 residues: Peptide methionine sulfoxide reductase MsrA (176 aa).

Cys14 is an active-site residue.

It belongs to the MsrA Met sulfoxide reductase family.

It carries out the reaction L-methionyl-[protein] + [thioredoxin]-disulfide + H2O = L-methionyl-(S)-S-oxide-[protein] + [thioredoxin]-dithiol. The enzyme catalyses [thioredoxin]-disulfide + L-methionine + H2O = L-methionine (S)-S-oxide + [thioredoxin]-dithiol. Functionally, has an important function as a repair enzyme for proteins that have been inactivated by oxidation. Catalyzes the reversible oxidation-reduction of methionine sulfoxide in proteins to methionine. In Halalkalibacterium halodurans (strain ATCC BAA-125 / DSM 18197 / FERM 7344 / JCM 9153 / C-125) (Bacillus halodurans), this protein is Peptide methionine sulfoxide reductase MsrA.